Reading from the N-terminus, the 127-residue chain is Aspartate 1-decarboxylase (127 aa).

The Schiff-base intermediate with substrate; via pyruvic acid role is filled by Ser-25. The residue at position 25 (Ser-25) is a Pyruvic acid (Ser). Thr-57 is a binding site for substrate. The active-site Proton donor is Tyr-58. Position 73 to 75 (73 to 75 (GAA)) interacts with substrate.

This sequence belongs to the PanD family. Heterooctamer of four alpha and four beta subunits. Requires pyruvate as cofactor. In terms of processing, is synthesized initially as an inactive proenzyme, which is activated by self-cleavage at a specific serine bond to produce a beta-subunit with a hydroxyl group at its C-terminus and an alpha-subunit with a pyruvoyl group at its N-terminus.

The protein resides in the cytoplasm. It catalyses the reaction L-aspartate + H(+) = beta-alanine + CO2. It functions in the pathway cofactor biosynthesis; (R)-pantothenate biosynthesis; beta-alanine from L-aspartate: step 1/1. Catalyzes the pyruvoyl-dependent decarboxylation of aspartate to produce beta-alanine. The sequence is that of Aspartate 1-decarboxylase from Staphylococcus aureus (strain MSSA476).